The primary structure comprises 365 residues: Aminomethyltransferase (365 aa).

Belongs to the GcvT family. As to quaternary structure, the glycine cleavage system is composed of four proteins: P, T, L and H.

It catalyses the reaction N(6)-[(R)-S(8)-aminomethyldihydrolipoyl]-L-lysyl-[protein] + (6S)-5,6,7,8-tetrahydrofolate = N(6)-[(R)-dihydrolipoyl]-L-lysyl-[protein] + (6R)-5,10-methylene-5,6,7,8-tetrahydrofolate + NH4(+). Its function is as follows. The glycine cleavage system catalyzes the degradation of glycine. The sequence is that of Aminomethyltransferase from Halalkalibacterium halodurans (strain ATCC BAA-125 / DSM 18197 / FERM 7344 / JCM 9153 / C-125) (Bacillus halodurans).